The following is a 443-amino-acid chain: Flavastacin (443 aa).

Residues 1–15 (MTRKLLILSGCLILA) form the signal peptide. Residues 16–91 (LNSCKSDMET…ANPDISTVER (76 aa)) constitute a propeptide, activation peptide. Residues 92–289 (STIVSSFIKT…AGINHLYGPV (198 aa)) enclose the Peptidase M12A domain. Histidine 189 provides a ligand contact to Zn(2+). Glutamate 190 is a catalytic residue. Zn(2+) contacts are provided by histidine 193 and histidine 199. In terms of domain architecture, Ricin B-type lectin spans 297-440 (GTYTLTTSLA…PYTKQRFTLT (144 aa)). An O-linked (Man...) serine glycan is attached at serine 355.

Zn(2+) is required as a cofactor. Post-translationally, O-linked glycan consists of the Man, GlcNAc, GlcU, Glc, GlcU, Rha, Man heptasaccharide.

It catalyses the reaction Hydrolyzes polypeptides on the amino-side of Asp in -Xaa-|-Asp-. Acts very slowly on -Xaa-|-Glu.. In terms of biological role, zinc metallendopeptidase that cleaves preferentially on N-terminal side of aspartate-containing substrates. In Elizabethkingia meningoseptica (Chryseobacterium meningosepticum), this protein is Flavastacin.